A 322-amino-acid chain; its full sequence is Ribosomal RNA small subunit methyltransferase H (322 aa).

S-adenosyl-L-methionine contacts are provided by residues 35-37, aspartate 52, phenylalanine 79, aspartate 100, and glutamine 107; that span reads GGY. Residues 254-322 form a disordered region; it reads GATPAGSRHL…TAPKKEGRQG (69 aa). Low complexity predominate over residues 295 to 309; it reads SRSATLRVARRTAAA.

It belongs to the methyltransferase superfamily. RsmH family.

It is found in the cytoplasm. It carries out the reaction cytidine(1402) in 16S rRNA + S-adenosyl-L-methionine = N(4)-methylcytidine(1402) in 16S rRNA + S-adenosyl-L-homocysteine + H(+). Its function is as follows. Specifically methylates the N4 position of cytidine in position 1402 (C1402) of 16S rRNA. The chain is Ribosomal RNA small subunit methyltransferase H from Rhizorhabdus wittichii (strain DSM 6014 / CCUG 31198 / JCM 15750 / NBRC 105917 / EY 4224 / RW1) (Sphingomonas wittichii).